Consider the following 349-residue polypeptide: MASCGEVDHSVSSLPSSKKGSGDSACSGSSGSSPALPVPECAICLQSCVHPVQLPCRHVFCFLCVKGASWQSKRCALCRQEVPEDFLEHPTLLSPEELKTGGRGATGDNAWYYEGRNGWWQYDERTSRELEDAFSKGKKTAEMLIAGFLYVADLENMVQYRRNEHGRRRKIKRDVVDIPKKGVAGLRLDTEGGVQGSAAAGRGNSADGADTSAAAVQQAAAAPAATTVLSAPARPPTSLGGQPGSPTSPSLEDTLALLHISPTDAPERAEVGEGEEEATATPSMSSSPNTYADGSGDWSDDEGDGEAVEPREQRLRLGESLVDRSPPGAEASSSSSVRSRRPDGQCTEV.

Residues 1–21 are disordered; it reads MASCGEVDHSVSSLPSSKKGS. A compositionally biased stretch (low complexity) spans 10-21; that stretch reads SVSSLPSSKKGS. An RING-type zinc finger spans residues 41–79; the sequence is CAICLQSCVHPVQLPCRHVFCFLCVKGASWQSKRCALCR. One can recognise a WWE domain in the interval 97–173; it reads ELKTGGRGAT…EHGRRRKIKR (77 aa). Y113, R116, W120, Y150, Q159, R169, and K181 together coordinate a glycoprotein. Disordered regions lie at residues 226 to 251 and 264 to 349; these read TTVL…SPSL and DAPE…CTEV. Residues 283–292 show a composition bias toward polar residues; sequence SMSSSPNTYA. The span at 298-307 shows a compositional bias: acidic residues; that stretch reads WSDDEGDGEA. Positions 308–317 are enriched in basic and acidic residues; it reads VEPREQRLRL.

Its subcellular location is the cytoplasm. The protein localises to the cytosol. It localises to the nucleus. It carries out the reaction S-ubiquitinyl-[E2 ubiquitin-conjugating enzyme]-L-cysteine + [acceptor protein]-L-lysine = [E2 ubiquitin-conjugating enzyme]-L-cysteine + N(6)-ubiquitinyl-[acceptor protein]-L-lysine.. It participates in protein modification; protein ubiquitination. In terms of biological role, E3 ubiquitin-protein ligase that specifically binds poly-ADP-ribosylated proteins and mediates their ubiquitination and subsequent degradation. May regulate many important biological processes, such as cell survival and DNA damage response. Acts as an activator of the Wnt signaling pathway by mediating the ubiquitination of poly-ADP-ribosylated proteins. Neuroprotective protein. Protects against cell death induced by DNA damaging agents and rescues cells from G1 arrest. Promotes cell survival after gamma-irradiation. Facilitates DNA repair. This is E3 ubiquitin-protein ligase rnf146 (rnf146) from Salmo salar (Atlantic salmon).